The chain runs to 322 residues: uncharacterized protein (322 aa).

Basic residues-rich tracts occupy residues Met1–Thr16 and Leu43–Val61. Residues Met1–Thr69 form a disordered region. Positions 261, 281, and 290 each coordinate S-adenosyl-L-methionine.

The protein belongs to the class IV-like SAM-binding methyltransferase superfamily. RNA methyltransferase TrmH family.

This is an uncharacterized protein from Mycobacterium tuberculosis (strain CDC 1551 / Oshkosh).